Consider the following 749-residue polypeptide: MPALPLDQLQITHKDPKTGQPKTSAALNPEQKADRYFVLYKPPPKDNIPALVEEYLERANFVANDLDWLLALPHDKFWCQVIFDETLQKCLDSYLHYVPRKFDEWVAPTPEVADMQNHLHRSVFLTFLRMSTHKESKDHFISPSAFGEILYNNFLFDIPKILDLCVLFGKGNSPLLQKMIGNIFTQQPSYYTDLDETIPTILQVFSNILQHCGLQGDGTSTTPQKLGERSPLTPSDMPLLELKDIVLYLCDTSTTLWAFLDIFPLACQTFQKHDFCYRLASFYEMAIPELESAIKKRRLEDSKLLGDMWQRLSHSKKKLMEVFHIILNQICLLPILESSCDNIQGFIEEFLQIFSSLLQEKRFLRDYDTFSPVAEDISLLQQASSALDETRTAYILQAVESAWEGVDRQKIKDIKDPPRAKGSNNEVTVTAEPVSEMPSQLENLEEDEECMGAAAALGPAVSGVELDSLISQVKDLLPDLGEGFILACLEHYSYDSEQVINNILEDRLAPELSQLDRGLERQVKPDPTPLLSSRHNIFQNDEFDVFSRDSVDLSRVHKGRRKEENVRSLVNDKQAVVAQWQRYQKYSVVVEEVPLQPGEYQADDYEDEYDDTYDGNQVGANDADSDDELISRRPFTIPQVLRTKMPGEVQEEEWDEEDEVEEEAPKPDHFIQDPAVLREKAEARRMAFLARKGYRPENSTAVTGGPRGHGQSRETTQERRKKEANKAARANHNRRTMADRKRSKGMIPS.

The interval 1 to 26 is disordered; sequence MPALPLDQLQITHKDPKTGQPKTSAA. Phosphothreonine is present on Thr-233. Residues 465-508 enclose the CUE domain; the sequence is ELDSLISQVKDLLPDLGEGFILACLEHYSYDSEQVINNILEDRL. Disordered stretches follow at residues 606 to 675 and 689 to 749; these read EDEY…QDPA and LARK…MIPS. Ser-625 bears the Phosphoserine mark. The segment covering 649 to 662 has biased composition (acidic residues); it reads VQEEEWDEEDEVEE. Composition is skewed to basic and acidic residues over residues 663–675 and 711–726; these read EAPKPDHFIQDPA and QSRETTQERRKKEANK.

This sequence belongs to the ASCC2 family. In terms of assembly, identified in the ASCC complex that contains ASCC1, ASCC2 and ASCC3. Interacts directly with ASCC3. The ASCC complex interacts with ALKBH3. Interacts (via CUE domain) with 'Lys-63'-linked polyubiquitin chains, but not with 'Lys-48'-linked polyubiquitin chains. Part of the ASC-1 complex, that contains TRIP4, ASCC1, ASCC2 and ASCC3. Component of the RQT (ribosome quality control trigger) complex, that contains ASCC2, ASCC3 and TRIP4. Interacts with CSRP1. Interacts with PRPF8, a component of the spliceosome. Interacts with ZCCHC4.

It localises to the nucleus. The protein resides in the nucleus speckle. In terms of biological role, ubiquitin-binding protein involved in DNA repair and rescue of stalled ribosomes. Plays a role in DNA damage repair as component of the ASCC complex. Recruits ASCC3 and ALKBH3 to sites of DNA damage by binding to polyubiquitinated proteins that have 'Lys-63'-linked polyubiquitin chains. Part of the ASC-1 complex that enhances NF-kappa-B, SRF and AP1 transactivation. Involved in activation of the ribosome quality control (RQC) pathway, a pathway that degrades nascent peptide chains during problematic translation. Specifically recognizes and binds RPS20/uS10 ubiquitinated by ZNF598, promoting recruitment of the RQT (ribosome quality control trigger) complex on stalled ribosomes, followed by disassembly of stalled ribosomes. This is Activating signal cointegrator 1 complex subunit 2 (Ascc2) from Mus musculus (Mouse).